A 590-amino-acid polypeptide reads, in one-letter code: MAAPPAKGNTEQSEEGDLPQLPVSPKPDDEQSRSQSPTQLQDSPEAGGEQEEEQAFLVSLYKFMKERHTPIERVPHLGFKQINLWKIYKAVEKLGAYELVTGRRLWKNVYDELGGSPGSTSAATCTRRHYERLVLPYVRHLKGEDDKPLPPTKPRKQYKMAKELRGDDGTTEKLKKAKDSEERRVEQTTPGKTKSDATGQTQLPCQGSSRDSTEQLGPVSGPSPPLTGASSCPEAYKRLLSSFYCKGAHGIMSPLAKKKLLAQVSKAEALQCQEEGCRHGARSPNKDIQDSPQNLRGPAENSEHQLTPREGLQAPGGSTRMEAQVGPCPTAPMFSGCFHAYPTEVLKPVSQHPRDFFSGLKDRVLLGPPGKEEGPTTKESHLVWGGDANHPSAFHKGSTRKRSFYPKPKACWVSPMAKVPTERPGAPSPHPSSPGLGSKRGLEEEGFAHGGKKLRAVSPFLKEVDSKETGGKPAAPGLAVSCLLGPTPGPTPPEAYRGTMLRCPLNFTGSADPLKGQASLPFSPLVIPAFPAHLLATTGSSPMAASLMHFPPTPYDAVLRNRLGPASSAWHMPPVTTYAAPHFFHLNTKL.

Residues 1–52 are disordered; sequence MAAPPAKGNTEQSEEGDLPQLPVSPKPDDEQSRSQSPTQLQDSPEAGGEQEE. The interaction with SOX9 stretch occupies residues 1 to 294; sequence MAAPPAKGNT…NKDIQDSPQN (294 aa). Ser-24 carries the post-translational modification Phosphoserine. Residues 33 to 42 are compositionally biased toward polar residues; the sequence is RSQSPTQLQD. An ARID domain is found at 50–142; that stretch reads QEEEQAFLVS…LVLPYVRHLK (93 aa). Glycyl lysine isopeptide (Lys-Gly) (interchain with G-Cter in ubiquitin) cross-links involve residues Lys-80 and Lys-89. A disordered region spans residues 141-229; it reads LKGEDDKPLP…SGPSPPLTGA (89 aa). The segment covering 160 to 186 has biased composition (basic and acidic residues); it reads MAKELRGDDGTTEKLKKAKDSEERRVE. A compositionally biased stretch (polar residues) spans 187–210; the sequence is QTTPGKTKSDATGQTQLPCQGSSR. 2 positions are modified to phosphoserine: Ser-253 and Ser-283. Disordered regions lie at residues 275-323, 367-402, and 419-443; these read EGCR…RMEA, GPPG…TRKR, and VPTE…RGLE. Residues 367–381 are compositionally biased toward basic and acidic residues; sequence GPPGKEEGPTTKESH. Phosphoserine is present on residues Ser-433 and Ser-458.

In terms of assembly, interacts with SOX9. Interacts with ESR1. Interacts with RORC. Phosphorylated by MAPK14 on serine residues involving a TLR4 signaling pathway upon lipopolysaccharide (LPS) stimulation leading to its ubiquitination and proteasomal degradation. Post-translationally, ubiquitinated leading to proteasomal degradation; involving WWP1 linked to MAPK14-mediated phosphorylation upon LPS stimulation. In terms of tissue distribution, expressed in T cells (at protein level). Expressed at high levels in cartilage, heart, testis and bone.

It is found in the nucleus. DNA-binding protein that may regulate transcription and act as a repressor by binding to AT-rich stretches in the promoter region of target genes. May positively regulate chondrocyte-specific transcription such as of COL2A1 in collaboration with SOX9 and positively regulate histone H3 acetylation at chondrocyte-specific genes. May stimulate early-stage chondrocyte differentiation and inhibit later stage differention. Can repress ESR1-mediated transcriptional activation; proposed to act as corepressor for selective nuclear hormone receptors. As an RNA-binding protein, involved in the regulation of inflammatory response by stabilizing selective inflammation-related mRNAs, such as STAT3 and TBX21. Also stabilizes IL6 mRNA. Binds to stem loop structures located in the 3'UTRs of IL6, STAT3 and TBX21 mRNAs; at least for STAT3 prevents binding of ZC3H12A to the mRNA stem loop structure thus inhibiting its degradation activity. Contributes to elevated IL6 levels possibly implicated in autoimmunity processes. IL6-dependent stabilization of STAT3 mRNA may promote differentiation of naive CD4+ T-cells into T-helper Th17 cells. In CD4+ T-cells may also inhibit RORC-induced Th17 cell differentiation independently of IL6 signaling. Stabilization of TBX21 mRNA contributes to elevated interferon-gamma secretion in Th1 cells possibly implicated in the establishment of septic shock. Stabilizes TNFRSF4/OX40 mRNA by binding to the conserved stem loop structure in its 3'UTR; thereby competing with the mRNA-destabilizing functions of RC3H1 and endoribonuclease ZC3H12A. In Mus musculus (Mouse), this protein is AT-rich interactive domain-containing protein 5A (Arid5a).